A 102-amino-acid chain; its full sequence is Small ribosomal subunit protein uS10 (102 aa).

Belongs to the universal ribosomal protein uS10 family. Part of the 30S ribosomal subunit.

In terms of biological role, involved in the binding of tRNA to the ribosomes. The sequence is that of Small ribosomal subunit protein uS10 from Lactobacillus helveticus (strain DPC 4571).